Consider the following 149-residue polypeptide: Chromophore lyase CpcS/CpeS homolog (149 aa).

This sequence belongs to the CpcS/CpeS biliprotein lyase family.

The protein localises to the plastid. It is found in the chloroplast. Might function to covalently attach a chromophore to Cys residue(s) of phycobiliproteins. The sequence is that of Chromophore lyase CpcS/CpeS homolog from Pyropia yezoensis (Susabi-nori).